Here is a 615-residue protein sequence, read N- to C-terminus: MKKSTRLLWLLSIIVLVAAVSKAVAEVDNDDDDDNTSLEGMTTAKRETLEVEDHTSLEGMVKREALEVKPPKAGKGKGKGKGRGTVAAGPEMNWPGQWELFMKNSGVSAMHAILMPLINKVQFYDATIWRISQIKLPPGVPCHVFDAKKNKVDCWAHSVLVDINTGDIKPLALTTDTWCSSGGLTVNGTLVSTGGFQGGANTARYLSTCENCVWIEYPKALAARRWYSTQATLPDGTFIVVGGRDALNYEYILPEGQNNKKLYDSQLLRQTDDPEENNLYPFVWLNTDGNLFIFANNRSILLSPKTNKVLKEFPQLPGGARNYPGSASSALLPIRLYVQNPAIIPADVLVCGGAKQDAYFRAERLKIYDWALKDCARLNINSAKPVWKTETMPTSRVMSDTVILPNGEILIINGAKRGSSGWHLAKEPNFAPLLYKPNKPLGQRFKELAPSTIPRVYHSIAIALPDGKVLVGGSNTNNGYQFNVEYPTELRIEKFSPPYLDPALANMRPRIVNTATPKQIKYGQMFDVKIELKQQNVAKENVMVTMLAPSFTTHSVSMNMRLLMLGINNVKNVGGDNHQIQAVAPPSGKLAPPGYYLLFAVYNGVPSVGEWIQIV.

The signal sequence occupies residues 1 to 25 (MKKSTRLLWLLSIIVLVAAVSKAVA). Asn35 carries N-linked (GlcNAc...) asparagine glycosylation. The segment at 70-89 (PPKAGKGKGKGKGRGTVAAG) is disordered. The segment covering 72–82 (KAGKGKGKGKG) has biased composition (basic residues). Asn187 and Asn297 each carry an N-linked (GlcNAc...) asparagine glycan.

It localises to the secreted. It carries out the reaction an aldehyde + O2 + H2O = a carboxylate + H2O2 + H(+). Functionally, catalyzes the oxidation of aldehydes to the corresponding carboxylate by coupling the reaction to the reduction of dioxygen to hydrogen peroxide. Substrates include glyoxal and other aldehydes. May be regulated by the transcription factor MYB80 during anther development and play a role in tapetum and pollen development. The protein is Aldehyde oxidase GLOX1 of Arabidopsis thaliana (Mouse-ear cress).